The sequence spans 590 residues: Cytosolic Fe-S cluster assembly factor nar1 (590 aa).

[4Fe-4S] cluster contacts are provided by Cys-20, Cys-62, Cys-65, Cys-68, Cys-214, Cys-269, Cys-456, and Cys-460.

This sequence belongs to the NARF family.

In terms of biological role, component of the cytosolic Fe/S protein assembly machinery. Required for maturation of extramitochondrial Fe/S proteins. May play a role in the transfer of pre-assembled Fe/S clusters to target apoproteins. The chain is Cytosolic Fe-S cluster assembly factor nar1 (nar1) from Talaromyces marneffei (strain ATCC 18224 / CBS 334.59 / QM 7333) (Penicillium marneffei).